The sequence spans 235 residues: Class A basic helix-loop-helix protein 9 (235 aa).

2 disordered regions span residues methionine 1 to alanine 69 and glycine 132 to serine 235. The segment covering arginine 55–arginine 67 has biased composition (basic residues). The bHLH domain occupies alanine 65–leucine 117.

As to quaternary structure, heterodimer. Efficient DNA binding requires dimerization with another bHLH protein. Interacts with TCF3, TCF4, and TCF12.

The protein localises to the nucleus. Its subcellular location is the cytoplasm. Its function is as follows. Transcription factor, which play a role in limb development. Is an essential player in the regulatory network governing transcription of genes implicated in limb morphogenesis. This is Class A basic helix-loop-helix protein 9 (BHLHA9) from Homo sapiens (Human).